We begin with the raw amino-acid sequence, 552 residues long: Terpene synthase 5 (552 aa).

Asp-307, Asp-311, and Glu-457 together coordinate Mg(2+). The short motif at 307 to 311 (DDTYD) is the DDXXD motif element.

Belongs to the terpene synthase family. It depends on Mg(2+) as a cofactor.

In terms of biological role, catalyzes the cyclization of farnesyl diphosphate to multiple sesquiterpenes, such as olefins and sesquiterpene alcohols. This chain is Terpene synthase 5 (TPS5), found in Ricinus communis (Castor bean).